Here is a 55-residue protein sequence, read N- to C-terminus: Large ribosomal subunit protein bL33 (55 aa).

Residues 1-11 (MAKSGRDKIKL) are compositionally biased toward basic and acidic residues. The disordered stretch occupies residues 1–27 (MAKSGRDKIKLESTAGTGHFYTTTKNK). Over residues 14–24 (TAGTGHFYTTT) the composition is skewed to polar residues.

This sequence belongs to the bacterial ribosomal protein bL33 family.

The protein is Large ribosomal subunit protein bL33 of Herminiimonas arsenicoxydans.